Reading from the N-terminus, the 274-residue chain is Putative phosphoenolpyruvate synthase regulatory protein (274 aa).

155-162 contributes to the ADP binding site; sequence GVSRSGKT.

This sequence belongs to the pyruvate, phosphate/water dikinase regulatory protein family. PSRP subfamily.

It carries out the reaction [pyruvate, water dikinase] + ADP = [pyruvate, water dikinase]-phosphate + AMP + H(+). The enzyme catalyses [pyruvate, water dikinase]-phosphate + phosphate + H(+) = [pyruvate, water dikinase] + diphosphate. Its function is as follows. Bifunctional serine/threonine kinase and phosphorylase involved in the regulation of the phosphoenolpyruvate synthase (PEPS) by catalyzing its phosphorylation/dephosphorylation. This Laribacter hongkongensis (strain HLHK9) protein is Putative phosphoenolpyruvate synthase regulatory protein.